Reading from the N-terminus, the 432-residue chain is Argininosuccinate lyase (432 aa).

Belongs to the lyase 1 family. Argininosuccinate lyase subfamily.

Its subcellular location is the cytoplasm. The enzyme catalyses 2-(N(omega)-L-arginino)succinate = fumarate + L-arginine. The protein operates within amino-acid biosynthesis; L-arginine biosynthesis; L-arginine from L-ornithine and carbamoyl phosphate: step 3/3. The chain is Argininosuccinate lyase from Xanthomonas axonopodis pv. citri (strain 306).